We begin with the raw amino-acid sequence, 407 residues long: Argininosuccinate synthase (407 aa).

ATP-binding positions include 16–24 (AYSGGLDTS) and Ala44. Residues Tyr96 and Ser101 each coordinate L-citrulline. Gly126 is a binding site for ATP. Residues Thr128, Asn132, and Asp133 each contribute to the L-aspartate site. Position 132 (Asn132) interacts with L-citrulline. Residues Arg136, Ser185, Ser194, Glu270, and Tyr282 each contribute to the L-citrulline site.

The protein belongs to the argininosuccinate synthase family. Type 1 subfamily. As to quaternary structure, homotetramer.

It is found in the cytoplasm. The catalysed reaction is L-citrulline + L-aspartate + ATP = 2-(N(omega)-L-arginino)succinate + AMP + diphosphate + H(+). It functions in the pathway amino-acid biosynthesis; L-arginine biosynthesis; L-arginine from L-ornithine and carbamoyl phosphate: step 2/3. This Shewanella putrefaciens (strain CN-32 / ATCC BAA-453) protein is Argininosuccinate synthase.